The chain runs to 38 residues: Large ribosomal subunit protein bL36 (38 aa).

Belongs to the bacterial ribosomal protein bL36 family.

The polypeptide is Large ribosomal subunit protein bL36 (Roseiflexus castenholzii (strain DSM 13941 / HLO8)).